Here is a 399-residue protein sequence, read N- to C-terminus: Tyrosine--tRNA ligase (399 aa).

Residue Tyr-36 participates in L-tyrosine binding. Positions 41 to 50 (PTAPSLHIGN) match the 'HIGH' region motif. The L-tyrosine site is built by Tyr-166 and Gln-170. Positions 226–230 (KMGKS) match the 'KMSKS' region motif. Residue Lys-229 participates in ATP binding. One can recognise an S4 RNA-binding domain in the interval 332–395 (TRLVDVIVDL…KKRFVTVQVI (64 aa)).

The protein belongs to the class-I aminoacyl-tRNA synthetase family. TyrS type 1 subfamily. Homodimer.

It is found in the cytoplasm. The catalysed reaction is tRNA(Tyr) + L-tyrosine + ATP = L-tyrosyl-tRNA(Tyr) + AMP + diphosphate + H(+). Catalyzes the attachment of tyrosine to tRNA(Tyr) in a two-step reaction: tyrosine is first activated by ATP to form Tyr-AMP and then transferred to the acceptor end of tRNA(Tyr). The protein is Tyrosine--tRNA ligase of Mycoplasma pneumoniae (strain ATCC 29342 / M129 / Subtype 1) (Mycoplasmoides pneumoniae).